Reading from the N-terminus, the 599-residue chain is Zinc metalloproteinase dpy-31 (599 aa).

A signal peptide spans methionine 1–glycine 22. Residues arginine 23–lysine 211 constitute a propeptide that is removed on maturation. Residues lysine 211–serine 410 form the Peptidase M12A domain. Residue asparagine 251 is glycosylated (N-linked (GlcNAc...) asparagine). 5 disulfides stabilise this stretch: cysteine 254–cysteine 409, cysteine 277–cysteine 298, cysteine 413–cysteine 433, cysteine 435–cysteine 444, and cysteine 455–cysteine 483. Zn(2+) is bound at residue histidine 306. The active site involves glutamate 307. Positions 310 and 316 each coordinate Zn(2+). The region spanning asparagine 405–glutamate 445 is the EGF-like domain. A CUB domain is found at cysteine 455 to leucine 571. N-linked (GlcNAc...) asparagine glycosylation occurs at asparagine 522.

Requires Zn(2+) as cofactor.

The protein localises to the secreted. With respect to regulation, inhibited by marimastat and tripeptide hydroxamic acids. In terms of biological role, metalloprotease which cleaves the carboxyl terminus of procollagens to mature collagens. Probably involved in cuticular collagen maturation. The protein is Zinc metalloproteinase dpy-31 of Brugia malayi (Filarial nematode worm).